The sequence spans 232 residues: Orotidine 5'-phosphate decarboxylase (232 aa).

Substrate-binding positions include D11, K33, 60-69 (DLKFHDIPNT), T120, R181, Q190, G210, and R211. K62 acts as the Proton donor in catalysis.

Belongs to the OMP decarboxylase family. Type 1 subfamily. Homodimer.

It carries out the reaction orotidine 5'-phosphate + H(+) = UMP + CO2. The protein operates within pyrimidine metabolism; UMP biosynthesis via de novo pathway; UMP from orotate: step 2/2. In terms of biological role, catalyzes the decarboxylation of orotidine 5'-monophosphate (OMP) to uridine 5'-monophosphate (UMP). The sequence is that of Orotidine 5'-phosphate decarboxylase from Vibrio vulnificus (strain CMCP6).